Here is a 230-residue protein sequence, read N- to C-terminus: Orotidine 5'-phosphate decarboxylase (230 aa).

Residues Asp10, Lys32, 59 to 68 (DLKYHDIPNT), Thr119, Arg180, Gln189, Gly209, and Arg210 each bind substrate. The Proton donor role is filled by Lys61.

It belongs to the OMP decarboxylase family. Type 1 subfamily. As to quaternary structure, homodimer.

It carries out the reaction orotidine 5'-phosphate + H(+) = UMP + CO2. Its pathway is pyrimidine metabolism; UMP biosynthesis via de novo pathway; UMP from orotate: step 2/2. Functionally, catalyzes the decarboxylation of orotidine 5'-monophosphate (OMP) to uridine 5'-monophosphate (UMP). The chain is Orotidine 5'-phosphate decarboxylase from Haemophilus influenzae (strain 86-028NP).